Reading from the N-terminus, the 189-residue chain is Apolipoprotein D (189 aa).

A signal peptide spans 1-20 (MATMLLLLATLAGLFTTTEG). The residue at position 21 (Q21) is a Pyrrolidone carboxylic acid. 2 disulfide bridges follow: C28-C134 and C61-C185. 2 N-linked (GlcNAc...) asparagine glycosylation sites follow: N65 and N98.

The protein belongs to the calycin superfamily. Lipocalin family. Homodimer. As to expression, expressed in liver, kidney, bladder, adrenal, cerebrum, duodenum, testis, lung, spleen, pancreas, heart and skin.

The protein resides in the secreted. Functionally, APOD occurs in the macromolecular complex with lecithin-transport and binding of bilin. Appears to be able to transport a variety of ligands in a number of different contexts. This is Apolipoprotein D (Apod) from Rattus norvegicus (Rat).